We begin with the raw amino-acid sequence, 275 residues long: Large ribosomal subunit protein uL2c (275 aa).

The disordered stretch occupies residues 224–275 (AMNPVDHPHGGGEGRTPIGRKKPVTPWGYSALGKKSRKRNRYSDASILRRRE).

Belongs to the universal ribosomal protein uL2 family. As to quaternary structure, part of the 50S ribosomal subunit.

The protein localises to the plastid. It is found in the chloroplast. The polypeptide is Large ribosomal subunit protein uL2c (rpl2) (Picea abies (Norway spruce)).